The primary structure comprises 250 residues: MSLRVNFSSEQAFLAQYQKSDYPSPLMTVDMAIFSVDQGQLQILLIQRSNYPQKSYWALPGGFVDLEQDQNLMACAHRKLLEKTGIDSPYLEQVASIGNAKRDPRGWSVTVLYFALINFKAYQQQIQHSEHSEWVTLEQALKLDLAFDHHDLLQQAFARLNNKTRYTALPISLMPPLFTLTELQNIYEIILGHNLEKKAFRRRMIESGVVEETDQSKIAGKRPAQLYRFALQDYDFNFPRMLEYPRHHED.

One can recognise a Nudix hydrolase domain in the interval 26–157 (LMTVDMAIFS…DHHDLLQQAF (132 aa)). The Nudix box motif lies at 62–85 (GFVDLEQDQNLMACAHRKLLEKTG). The winged helix-like DNA-binding region stretch occupies residues 164–237 (TRYTALPISL…RFALQDYDFN (74 aa)).

DNA binding is efficiently suppressed in the presence of ADP-ribose (ADPR) or phospho-ADPR. Accumulation of ADPR resulting from NAD degradation may be interpreted by the cell as a signal to activate recycling of nicotinamide. Its function is as follows. Involved in the transcriptional regulation of the nondeamidating salvage pathway for production of NAD from nicotinamide. Represses expression of the prs-nadV-nrtR operon by binding to the DNA region located upstream of the operon, thus blocking the nondeamidating pathway. This Acinetobacter baylyi (strain ATCC 33305 / BD413 / ADP1) protein is ADPR responsive transcriptional repressor NtrR.